The sequence spans 200 residues: Holliday junction branch migration complex subunit RuvA (200 aa).

Residues 1–63 (MYAYIKGTLS…EDAQLLYGFI (63 aa)) form a domain I region. The tract at residues 64 to 142 (NEEEKEMFLS…ITEENSDDLL (79 aa)) is domain II. A flexible linker region spans residues 143 to 149 (QTQVNGN). The segment at 150 to 200 (EQNQIISEALLALQALGYSKRELTKVEKSLNKHNVNSVDEAVKIGLQTLVS) is domain III.

Belongs to the RuvA family. As to quaternary structure, homotetramer. Forms an RuvA(8)-RuvB(12)-Holliday junction (HJ) complex. HJ DNA is sandwiched between 2 RuvA tetramers; dsDNA enters through RuvA and exits via RuvB. An RuvB hexamer assembles on each DNA strand where it exits the tetramer. Each RuvB hexamer is contacted by two RuvA subunits (via domain III) on 2 adjacent RuvB subunits; this complex drives branch migration. In the full resolvosome a probable DNA-RuvA(4)-RuvB(12)-RuvC(2) complex forms which resolves the HJ.

It localises to the cytoplasm. The RuvA-RuvB-RuvC complex processes Holliday junction (HJ) DNA during genetic recombination and DNA repair, while the RuvA-RuvB complex plays an important role in the rescue of blocked DNA replication forks via replication fork reversal (RFR). RuvA specifically binds to HJ cruciform DNA, conferring on it an open structure. The RuvB hexamer acts as an ATP-dependent pump, pulling dsDNA into and through the RuvAB complex. HJ branch migration allows RuvC to scan DNA until it finds its consensus sequence, where it cleaves and resolves the cruciform DNA. In Staphylococcus epidermidis (strain ATCC 35984 / DSM 28319 / BCRC 17069 / CCUG 31568 / BM 3577 / RP62A), this protein is Holliday junction branch migration complex subunit RuvA.